The following is a 124-amino-acid chain: Nascent polypeptide-associated complex protein (124 aa).

The NAC-A/B domain occupies G7–G74. Residues A53–E124 form a disordered region. The span at G74–E93 shows a compositional bias: acidic residues.

The protein belongs to the NAC-alpha family. In terms of assembly, homodimer. Interacts with the ribosome. Binds ribosomal RNA.

Contacts the emerging nascent chain on the ribosome. This Natronomonas pharaonis (strain ATCC 35678 / DSM 2160 / CIP 103997 / JCM 8858 / NBRC 14720 / NCIMB 2260 / Gabara) (Halobacterium pharaonis) protein is Nascent polypeptide-associated complex protein.